Reading from the N-terminus, the 603-residue chain is Isovalerate--CoA ligase AAE2 (603 aa).

Belongs to the ATP-dependent AMP-binding enzyme family. In terms of tissue distribution, expressed at low levels in leaves, flowers and developing seeds.

The enzyme catalyses 3-methylbutanoate + ATP + CoA = 3-methylbutanoyl-CoA + AMP + diphosphate. It catalyses the reaction hexanoate + ATP + CoA = hexanoyl-CoA + AMP + diphosphate. It carries out the reaction butanoate + ATP + CoA = butanoyl-CoA + AMP + diphosphate. The catalysed reaction is pentanoate + ATP + CoA = pentanoyl-CoA + AMP + diphosphate. The enzyme catalyses 3-methylpentanoate + ATP + CoA = 3-methylpentanoyl-CoA + AMP + diphosphate. It catalyses the reaction 4-methylpentanoate + ATP + CoA = 4-methylpentanoyl-CoA + AMP + diphosphate. In terms of biological role, catalyzes the ligation of CoA on isovalerate to produce 3-methylbutanoyl-CoA. Can also use butanoate, pentanoate, hexanoate, 3-methylpentanoate and 4-methylpentanoate as substrates with a lower efficiency. The protein is Isovalerate--CoA ligase AAE2 of Arabidopsis thaliana (Mouse-ear cress).